Reading from the N-terminus, the 128-residue chain is MDAVAVYHGKISRETGEKLLLATGLDGSYLLRDSESVPGVYCLCVLYHGYIYTYRVSQTETGSWSAETAPGVHKRYFRKIKNLISAFQKPDQGIVIPLQYPVEKKSSARSTQGTTGIREDPDVCLKAP.

One can recognise an SH2 domain in the interval valine 6–valine 102. The interaction with FYN SH3 domain stretch occupies residues glutamate 67–glutamine 92. Lysine 89 is subject to N6-acetyllysine. A disordered region spans residues serine 106–proline 128. Residues isoleucine 117–proline 128 show a composition bias toward basic and acidic residues.

As to quaternary structure, interacts with CD84, CD244, LY9, SLAMF1 and FYN. Interacts with NTRK1, NTRK2 and NTRK3.

The protein resides in the cytoplasm. Functionally, cytoplasmic adapter regulating receptors of the signaling lymphocytic activation molecule (SLAM) family such as SLAMF1, CD244, LY9, CD84, SLAMF6 and SLAMF7. In SLAM signaling seems to cooperate with SH2D1B/EAT-2. Initially it has been proposed that association with SLAMF1 prevents SLAMF1 binding to inhibitory effectors including INPP5D/SHIP1 and PTPN11/SHP-2. However, by simultaneous interactions, recruits FYN which subsequently phosphorylates and activates SLAMF1. Positively regulates CD244/2B4- and CD84-mediated natural killer (NK) cell functions. Can also promote CD48-, SLAMF6 -, LY9-, and SLAMF7-mediated NK cell activation. In the context of NK cell-mediated cytotoxicity enhances conjugate formation with target cells. May also regulate the activity of the neurotrophin receptors NTRK1, NTRK2 and NTRK3. The polypeptide is SH2 domain-containing protein 1A (SH2D1A) (Macaca mulatta (Rhesus macaque)).